The sequence spans 629 residues: MFYQDPFDVIIIGGGHAGTEAAMAAARMGQQTLLLTHNIDTLGQMSCNPAIGGIGKGHLVKEVDALGGLMAKAIDQAGIQFRILNASKGPAVRATRAQADRVLYRQAVRTALENQPNLMIFQQAVEDLIVENDRVVGAVTQMGLKFRAKAVVLTVGTFLDGKIHIGLDNYSGGRAGDPPSIPLSRRLRELPLRVSRLKTGTPPRIDARTIDFSVLAQQHGDNPMPVFSFMGNASQHPQQVPCYITHTNEKTHDVIRNNLDRSPMYAGVIEGIGPRYCPSIEDKVMRFADRNQHQIFLEPEGLTSNEIYPNGISTSLPFDVQMQIVRSMQGMENAKIVRPGYAIEYDFFDPRDLKPTLESKFIHGLFFAGQINGTTGYEEAAAQGLLAGLNAARLSADKEGWAPARSQAYLGVLVDDLCTLGTKEPYRMFTSRAEYRLMLREDNADLRLTEMGRELGLVDDERWARFNEKLENIERERQRLKSTWVTPSAESADEVNTHLTTPLSREASGEDLLRRPEMTYAQLTSLAAFAPALEDEQAAEQVEIQVKYEGYIARQQDEIEKQLRNENTLLPATLDYRQVSGLSNEVIAKLNDHKPASIGQASRISGVTPAAISILLVWLKKQGMLRRSA.

FAD-binding positions include 13-18 (GGGHAG), V125, and S180. Residue 273–287 (GPRYCPSIEDKVMRF) participates in NAD(+) binding. Q370 is a binding site for FAD.

It belongs to the MnmG family. Homodimer. Heterotetramer of two MnmE and two MnmG subunits. It depends on FAD as a cofactor.

The protein localises to the cytoplasm. NAD-binding protein involved in the addition of a carboxymethylaminomethyl (cmnm) group at the wobble position (U34) of certain tRNAs, forming tRNA-cmnm(5)s(2)U34. The chain is tRNA uridine 5-carboxymethylaminomethyl modification enzyme MnmG from Salmonella schwarzengrund (strain CVM19633).